The primary structure comprises 481 residues: Proline--tRNA ligase (481 aa).

The protein belongs to the class-II aminoacyl-tRNA synthetase family. ProS type 3 subfamily. In terms of assembly, homodimer.

The protein resides in the cytoplasm. It catalyses the reaction tRNA(Pro) + L-proline + ATP = L-prolyl-tRNA(Pro) + AMP + diphosphate. Catalyzes the attachment of proline to tRNA(Pro) in a two-step reaction: proline is first activated by ATP to form Pro-AMP and then transferred to the acceptor end of tRNA(Pro). The chain is Proline--tRNA ligase from Saccharolobus islandicus (strain M.16.27) (Sulfolobus islandicus).